Reading from the N-terminus, the 91-residue chain is Molybdopterin synthase sulfur carrier subunit (91 aa).

Gly91 carries the post-translational modification 1-thioglycine; alternate. Gly91 carries the glycyl adenylate; alternate modification.

This sequence belongs to the MoaD family. MOCS2A subfamily. As to quaternary structure, heterotetramer; composed of 2 small (MOCS2A) and 2 large (MOCS2B) subunits. In terms of processing, C-terminal thiocarboxylation occurs in 2 steps, it is first acyl-adenylated (-COAMP) via the hesA/moeB/thiF part of MOCS3, then thiocarboxylated (-COSH) via the rhodanese domain of MOCS3.

It localises to the cytoplasm. It participates in cofactor biosynthesis; molybdopterin biosynthesis. In terms of biological role, acts as a sulfur carrier required for molybdopterin biosynthesis. Component of the molybdopterin synthase complex that catalyzes the conversion of precursor Z into molybdopterin by mediating the incorporation of 2 sulfur atoms into precursor Z to generate a dithiolene group. In the complex, serves as sulfur donor by being thiocarboxylated (-COSH) at its C-terminus by MOCS3. After interaction with MOCS2B, the sulfur is then transferred to precursor Z to form molybdopterin. This Anopheles gambiae (African malaria mosquito) protein is Molybdopterin synthase sulfur carrier subunit.